Here is a 118-residue protein sequence, read N- to C-terminus: Holo-[acyl-carrier-protein] synthase (118 aa).

Positions 8 and 57 each coordinate Mg(2+).

The protein belongs to the P-Pant transferase superfamily. AcpS family. Mg(2+) is required as a cofactor.

It localises to the cytoplasm. It carries out the reaction apo-[ACP] + CoA = holo-[ACP] + adenosine 3',5'-bisphosphate + H(+). In terms of biological role, transfers the 4'-phosphopantetheine moiety from coenzyme A to a Ser of acyl-carrier-protein. This Pediococcus pentosaceus (strain ATCC 25745 / CCUG 21536 / LMG 10740 / 183-1w) protein is Holo-[acyl-carrier-protein] synthase.